A 129-amino-acid polypeptide reads, in one-letter code: Phosphoribosyl-AMP cyclohydrolase (129 aa).

Position 78 (Asp78) interacts with Mg(2+). Zn(2+) is bound at residue Cys79. Residues Asp80 and Asp82 each contribute to the Mg(2+) site. Zn(2+) is bound by residues Cys96 and Cys103.

The protein belongs to the PRA-CH family. Homodimer. It depends on Mg(2+) as a cofactor. The cofactor is Zn(2+).

It localises to the cytoplasm. The catalysed reaction is 1-(5-phospho-beta-D-ribosyl)-5'-AMP + H2O = 1-(5-phospho-beta-D-ribosyl)-5-[(5-phospho-beta-D-ribosylamino)methylideneamino]imidazole-4-carboxamide. The protein operates within amino-acid biosynthesis; L-histidine biosynthesis; L-histidine from 5-phospho-alpha-D-ribose 1-diphosphate: step 3/9. In terms of biological role, catalyzes the hydrolysis of the adenine ring of phosphoribosyl-AMP. This chain is Phosphoribosyl-AMP cyclohydrolase, found in Nitrosomonas eutropha (strain DSM 101675 / C91 / Nm57).